The following is a 362-amino-acid chain: 3-dehydroquinate synthase (362 aa).

NAD(+) is bound by residues aspartate 71–lysine 76, glycine 105–aspartate 109, threonine 129–threonine 130, lysine 142, and lysine 151. 3 residues coordinate Zn(2+): glutamate 184, histidine 247, and histidine 264.

The protein belongs to the sugar phosphate cyclases superfamily. Dehydroquinate synthase family. The cofactor is NAD(+). It depends on Co(2+) as a cofactor. Zn(2+) serves as cofactor.

It localises to the cytoplasm. It catalyses the reaction 7-phospho-2-dehydro-3-deoxy-D-arabino-heptonate = 3-dehydroquinate + phosphate. Its pathway is metabolic intermediate biosynthesis; chorismate biosynthesis; chorismate from D-erythrose 4-phosphate and phosphoenolpyruvate: step 2/7. Functionally, catalyzes the conversion of 3-deoxy-D-arabino-heptulosonate 7-phosphate (DAHP) to dehydroquinate (DHQ). The protein is 3-dehydroquinate synthase of Haemophilus ducreyi (strain 35000HP / ATCC 700724).